The following is a 176-amino-acid chain: Flavodoxin 1 (176 aa).

Residues 4-165 (TGIFFGSDTG…RVEKWVKQVS (162 aa)) form the Flavodoxin-like domain.

This sequence belongs to the flavodoxin family. It depends on FMN as a cofactor.

Its function is as follows. Low-potential electron donor to a number of redox enzymes (Potential). Involved in the reactivation of inactive cob(II)alamin in methionine synthase. The protein is Flavodoxin 1 (fldA) of Salmonella typhimurium (strain LT2 / SGSC1412 / ATCC 700720).